The chain runs to 577 residues: Outer spore wall assembly protein SHE10 (577 aa).

Positions 1–23 are cleaved as a signal peptide; it reads MGKLIKLITTLTVLVSLLQYCCE. 2 coiled-coil regions span residues 379–416 and 513–561; these read NETRSTLDELTNAMEKDLSEITDEIEKKVNAIREENVE and ILRS…EEDV. The segment covering 525–545 has biased composition (basic and acidic residues); that stretch reads RERKERERKEREKAAAEEFQR. A disordered region spans residues 525-577; it reads RERKERERKEREKAAAEEFQRQQELLLQQEEEDEEDVSYTSTSTITTTTTMTL. The span at 562 to 577 shows a compositional bias: low complexity; it reads SYTSTSTITTTTTMTL.

The protein belongs to the SHE10 family. Component of the mitochondria-localized RNase mitochondrial RNA-processing (RNase MRP) composed of one single RNA encoded by the NME1 gene and at least 31 proteins. Absent in the nucleus-localized RNase MRP (NuMRP).

The protein resides in the mitochondrion. In terms of biological role, involved in spore wall assembly. May be a component of the mitochondrial RNase MRP (MtMRP), a ribonucleoprotein endoribonuclease involved in the cleaving RNA transcripts to generate primers for DNA replication in mitochondria. This is Outer spore wall assembly protein SHE10 from Saccharomyces cerevisiae (strain JAY291) (Baker's yeast).